The following is a 450-amino-acid chain: Cysteine protease ATG4C (450 aa).

Residue Cys-112 is the Nucleophile of the active site. Active-site residues include Asp-336 and His-338.

It belongs to the peptidase C54 family.

It localises to the cytoplasm. It catalyses the reaction [protein]-C-terminal L-amino acid-glycyl-phosphatidylethanolamide + H2O = [protein]-C-terminal L-amino acid-glycine + a 1,2-diacyl-sn-glycero-3-phosphoethanolamine. Cysteine protease that plays a key role in autophagy by mediating both proteolytic activation and delipidation of ATG8 family proteins. The protease activity is required for proteolytic activation of ATG8 family proteins: cleaves the C-terminal amino acid of ATG8 proteins to reveal a C-terminal glycine. Exposure of the glycine at the C-terminus is essential for ATG8 proteins conjugation to phosphatidylethanolamine (PE) and insertion to membranes, which is necessary for autophagy. In addition to the protease activity, also mediates delipidation of ATG8 family proteins. Catalyzes delipidation of PE-conjugated forms of ATG8 proteins during macroautophagy. This chain is Cysteine protease ATG4C, found in Xenopus tropicalis (Western clawed frog).